A 250-amino-acid chain; its full sequence is Glycerol-1-phosphate phosphohydrolase 2 (250 aa).

D18 serves as the catalytic Nucleophile. Mg(2+) is bound by residues D18 and D20. D20 functions as the Proton donor in the catalytic mechanism. Residue K64 forms a Glycyl lysine isopeptide (Lys-Gly) (interchain with G-Cter in ubiquitin) linkage. S90 is modified (phosphoserine). K144 is covalently cross-linked (Glycyl lysine isopeptide (Lys-Gly) (interchain with G-Cter in ubiquitin)). D179 contacts Mg(2+).

The protein belongs to the HAD-like hydrolase superfamily. DOG/GPP family. As to quaternary structure, monomer. The cofactor is Mg(2+).

It localises to the cytoplasm. The protein resides in the nucleus. It carries out the reaction sn-glycerol 1-phosphate + H2O = glycerol + phosphate. It catalyses the reaction sn-glycerol 3-phosphate + H2O = glycerol + phosphate. Its function is as follows. Glycerol-1-phosphate phosphohydrolase involved in glycerol biosynthesis. Plays a role in osmoadaptation. The protein is Glycerol-1-phosphate phosphohydrolase 2 of Saccharomyces cerevisiae (strain ATCC 204508 / S288c) (Baker's yeast).